An 836-amino-acid polypeptide reads, in one-letter code: Tuftelin-interacting protein 11 (836 aa).

The span at 1–13 (MSLSHLYRDGEGH) shows a compositional bias: basic and acidic residues. Disordered stretches follow at residues 1–31 (MSLS…DWDL), 54–73 (WAER…RARD), and 85–136 (LKKG…AGGT). A required for interaction with DHX15 region spans residues 1 to 50 (MSLSHLYRDGEGHMDDDEDERENFEITDWDLQNEFNPNRQRHWQTKEEAT). At Ser-2 the chain carries Phosphoserine. Over residues 14–28 (MDDDEDERENFEITD) the composition is skewed to acidic residues. Basic and acidic residues predominate over residues 54–64 (WAERDSDEERP). Ser-59 and Ser-98 each carry phosphoserine. Residues 91 to 102 (EEAELEDSDDEE) are compositionally biased toward acidic residues. Residues 103-116 (KPVKQDEFPKDFGP) show a composition bias toward basic and acidic residues. Ser-144 is subject to Phosphoserine. The region spanning 149–195 (TKGIGQKLLQKMGYVPGRGLGKNAQGIINPIEAKQRKGKGAVGAYGS) is the G-patch domain. A disordered region spans residues 183–236 (QRKGKGAVGAYGSERTTQSLQDFPVVDSEEEAEEEFQKELSQWRKDPSGSKKKP). Ser-210 is subject to Phosphoserine. Positions 217 to 231 (EFQKELSQWRKDPSG) are enriched in basic and acidic residues. Residues 699–704 (VKDKFN) carry the Nuclear localization signal motif. A required for nuclear speckle localization region spans residues 709 to 733 (IMNRAVSSNVGAYMQPGARENIAYL).

This sequence belongs to the TFP11/STIP family. Identified in the spliceosome C complex. Found in the Intron Large (IL) complex, a post-mRNA release spliceosomal complex containing the excised intron, U2, U5 and U6 snRNPs, and splicing factors. Interacts with TUFT1. Interacts with DHX15; indicative for a recruitment of DHX15 to the IL complex. Interacts with GCFC2.

The protein resides in the cytoplasm. It localises to the nucleus. Its function is as follows. Involved in pre-mRNA splicing, specifically in spliceosome disassembly during late-stage splicing events. Intron turnover seems to proceed through reactions in two lariat-intron associated complexes termed Intron Large (IL) and Intron Small (IS). In cooperation with DHX15 seems to mediate the transition of the U2, U5 and U6 snRNP-containing IL complex to the snRNP-free IS complex leading to efficient debranching and turnover of excised introns. May play a role in the differentiation of ameloblasts and odontoblasts or in the forming of the enamel extracellular matrix. In Sus scrofa (Pig), this protein is Tuftelin-interacting protein 11 (TFIP11).